The chain runs to 207 residues: Myosin light chain 6B (207 aa).

The interval 1–50 (MPPKKDAPVKKPAGPSISKPAAKSTPGTPLAKAKAEPAAPQAPAKSQEPP) is disordered. The span at 36–50 (EPAAPQAPAKSQEPP) shows a compositional bias: low complexity. EF-hand domains are found at residues 63 to 98 (DQLE…LGQN), 140 to 175 (GTYE…LGEK), and 175 to 207 (KMTE…ILSL).

In terms of assembly, myosin is a hexamer of 2 heavy chains and 4 light chains.

Its function is as follows. Regulatory light chain of myosin. Does not bind calcium. This Mus musculus (Mouse) protein is Myosin light chain 6B.